The sequence spans 88 residues: Small ribosomal subunit protein uS17 (88 aa).

It belongs to the universal ribosomal protein uS17 family. As to quaternary structure, part of the 30S ribosomal subunit.

One of the primary rRNA binding proteins, it binds specifically to the 5'-end of 16S ribosomal RNA. In Prochlorococcus marinus (strain MIT 9312), this protein is Small ribosomal subunit protein uS17.